The chain runs to 251 residues: Ubiquinone/menaquinone biosynthesis C-methyltransferase UbiE (251 aa).

S-adenosyl-L-methionine contacts are provided by residues Thr-74, Asp-95, and 123-124 (NA).

This sequence belongs to the class I-like SAM-binding methyltransferase superfamily. MenG/UbiE family.

It catalyses the reaction a 2-demethylmenaquinol + S-adenosyl-L-methionine = a menaquinol + S-adenosyl-L-homocysteine + H(+). It carries out the reaction a 2-methoxy-6-(all-trans-polyprenyl)benzene-1,4-diol + S-adenosyl-L-methionine = a 5-methoxy-2-methyl-3-(all-trans-polyprenyl)benzene-1,4-diol + S-adenosyl-L-homocysteine + H(+). The protein operates within quinol/quinone metabolism; menaquinone biosynthesis; menaquinol from 1,4-dihydroxy-2-naphthoate: step 2/2. It participates in cofactor biosynthesis; ubiquinone biosynthesis. Its function is as follows. Methyltransferase required for the conversion of demethylmenaquinol (DMKH2) to menaquinol (MKH2) and the conversion of 2-polyprenyl-6-methoxy-1,4-benzoquinol (DDMQH2) to 2-polyprenyl-3-methyl-6-methoxy-1,4-benzoquinol (DMQH2). The protein is Ubiquinone/menaquinone biosynthesis C-methyltransferase UbiE of Erwinia tasmaniensis (strain DSM 17950 / CFBP 7177 / CIP 109463 / NCPPB 4357 / Et1/99).